Consider the following 321-residue polypeptide: Lipoyl synthase (321 aa).

7 residues coordinate [4Fe-4S] cluster: Cys68, Cys73, Cys79, Cys94, Cys98, Cys101, and Ser308. The Radical SAM core domain occupies 80-297 (FNHGTATFMI…KAEAMAMGFT (218 aa)).

This sequence belongs to the radical SAM superfamily. Lipoyl synthase family. [4Fe-4S] cluster serves as cofactor.

It is found in the cytoplasm. The enzyme catalyses [[Fe-S] cluster scaffold protein carrying a second [4Fe-4S](2+) cluster] + N(6)-octanoyl-L-lysyl-[protein] + 2 oxidized [2Fe-2S]-[ferredoxin] + 2 S-adenosyl-L-methionine + 4 H(+) = [[Fe-S] cluster scaffold protein] + N(6)-[(R)-dihydrolipoyl]-L-lysyl-[protein] + 4 Fe(3+) + 2 hydrogen sulfide + 2 5'-deoxyadenosine + 2 L-methionine + 2 reduced [2Fe-2S]-[ferredoxin]. Its pathway is protein modification; protein lipoylation via endogenous pathway; protein N(6)-(lipoyl)lysine from octanoyl-[acyl-carrier-protein]: step 2/2. Functionally, catalyzes the radical-mediated insertion of two sulfur atoms into the C-6 and C-8 positions of the octanoyl moiety bound to the lipoyl domains of lipoate-dependent enzymes, thereby converting the octanoylated domains into lipoylated derivatives. The sequence is that of Lipoyl synthase from Yersinia pseudotuberculosis serotype O:1b (strain IP 31758).